We begin with the raw amino-acid sequence, 208 residues long: Large ribosomal subunit protein uL4 (208 aa).

The disordered stretch occupies residues 49–78 (KAKGISDISGTTAKPYRQKHTGRARQGSLR).

It belongs to the universal ribosomal protein uL4 family. Part of the 50S ribosomal subunit.

Its function is as follows. One of the primary rRNA binding proteins, this protein initially binds near the 5'-end of the 23S rRNA. It is important during the early stages of 50S assembly. It makes multiple contacts with different domains of the 23S rRNA in the assembled 50S subunit and ribosome. In terms of biological role, forms part of the polypeptide exit tunnel. This Anaplasma phagocytophilum (strain HZ) protein is Large ribosomal subunit protein uL4.